Reading from the N-terminus, the 673-residue chain is Pesticin receptor (673 aa).

The N-terminal stretch at 1-22 (MKMTRLYPLALGGLLLPAIANA) is a signal peptide. A TonB box motif is present at residues 30 to 37 (STLEVTAS). Residues 41-155 (SRSASANNVS…QGGIINIVTQ (115 aa)) form the TBDR plug domain. One can recognise a TBDR beta-barrel domain in the interval 160–672 (TPRGYIEGGV…TVGINTRIDF (513 aa)). Positions 657 to 673 (QVNMGRTVGINTRIDFF) match the TonB C-terminal box motif.

Belongs to the TonB-dependent receptor family.

The protein resides in the cell outer membrane. Functionally, receptor for the bacteriocin pesticin and for the siderophore yersiniabactin. The chain is Pesticin receptor (fyuA) from Yersinia enterocolitica serotype O:8 / biotype 1B (strain NCTC 13174 / 8081).